Consider the following 1204-residue polypeptide: TPR repeat-containing protein DDB_G0287999 (1204 aa).

Residues 32–48 (TTDTTTTTSTSTTTDTD) are compositionally biased toward low complexity. The disordered stretch occupies residues 32–55 (TTDTTTTTSTSTTTDTDTNSEKSN). TPR repeat units lie at residues 263 to 296 (SKGL…YKDL), 379 to 412 (NDSN…DQLY), and 583 to 617 (IQHF…GSVT). The tract at residues 360–387 (QPPPQEQQLMDDDSNSNSNNDSNNIIKN) is disordered. The segment covering 374–387 (NSNSNNDSNNIIKN) has biased composition (low complexity). Disordered regions lie at residues 639–660 (NNNN…NNNN) and 761–797 (DDND…KTTT). Positions 766 to 778 (DNNNNNNNNNNNN) are enriched in low complexity.

The polypeptide is TPR repeat-containing protein DDB_G0287999 (Dictyostelium discoideum (Social amoeba)).